The primary structure comprises 224 residues: Dimethyl sulfoxide reductase transcriptional activator (224 aa).

Residues 158–209 form the HTH bat-type domain; that stretch reads LTDKQREAAAAAVAKGYYATPRGADLSDLATALGISKSAVSQRLSAVESKLA.

Involved in activating dmsEABCD gene expression related to dimethyl sulfoxide (DMSO) reductase. Required for anaerobic respiration on dimethyl sulfoxide (DMSO) and trimethylamine N-oxide (TMAO). The sequence is that of Dimethyl sulfoxide reductase transcriptional activator (dmsR) from Halobacterium salinarum (strain ATCC 700922 / JCM 11081 / NRC-1) (Halobacterium halobium).